Reading from the N-terminus, the 283-residue chain is Putative ABC transporter ATP-binding protein MA_4342 (283 aa).

The 236-residue stretch at 3–238 folds into the ABC transporter domain; sequence IILENVSFFY…KNVPLPPVTS (236 aa). 40–47 lines the ATP pocket; that stretch reads GEKGAGKS.

The protein belongs to the ABC transporter superfamily.

Its subcellular location is the cell membrane. Functionally, probably part of an ABC transporter complex. Responsible for energy coupling to the transport system. The protein is Putative ABC transporter ATP-binding protein MA_4342 of Methanosarcina acetivorans (strain ATCC 35395 / DSM 2834 / JCM 12185 / C2A).